The following is a 454-amino-acid chain: Lamina-associated polypeptide 2, isoforms beta/gamma (454 aa).

A nucleoplasmic region spans residues 1–410 (MPEFLEDPSV…KSEKTKKGRS (410 aa)). An LEM-like domain is found at 5–48 (LEDPSVLTKDKLKSELVANNVTLPAGEQRKDVYVQLYLQHLTAR). 2 disordered regions span residues 47–117 (ARNR…ELTN) and 149–265 (LREQ…VETS). The segment at 49–108 (NRPPLPAGTNSKGPPDFSSDEEREPTPVLGSGAAAAGRSRAAVGRKATKKTDKPRQEDKD) is linker. Residue T57 is modified to Phosphothreonine. S59, S66, and S67 each carry phosphoserine. The residue at position 74 (T74) is a Phosphothreonine. Over residues 78–93 (GSGAAAAGRSRAAVGR) the composition is skewed to low complexity. S79 is modified (phosphoserine). R86 and R88 each carry omega-N-methylarginine. Over residues 97–106 (KKTDKPRQED) the composition is skewed to basic and acidic residues. Residues 107–117 (KDDLDVTELTN) are compositionally biased toward acidic residues. An LEM domain is found at 109 to 153 (DLDVTELTNEDLLDQLVKYGVNPGPIVGTTRKLYEKKLLKLREQG). Positions 138 to 243 (TRKLYEKKLL…TSGSSKGGPL (106 aa)) are NAKAP95-binding N. Residue T154 is modified to Phosphothreonine. The segment covering 155–178 (ESRSSTPLPTISSSAENTRQNGSN) has biased composition (polar residues). Phosphoserine is present on residues S156 and S159. Phosphothreonine occurs at positions 160 and 164. S166, S168, S177, S180, S184, and S190 each carry phosphoserine. The span at 179–203 (DSDRYSDNEEDSKIELKLEKREPLK) shows a compositional bias: basic and acidic residues. N6-acetyllysine is present on K207. Position 211 is a phosphothreonine (T211). Residues 220–237 (NQSYSQAGITETEWTSGS) are compositionally biased toward polar residues. Phosphoserine occurs at positions 222, 224, 250, 254, 265, 292, and 306. Residues 299–371 (TGNFKHASPI…SCRRPIKGAA (73 aa)) form a binds lamins B region. The interval 300 to 374 (GNFKHASPIL…RPIKGAAGRP (75 aa)) is NAKAP95-binding C. At T312 the chain carries Phosphothreonine. S315 bears the Phosphoserine mark. R320 carries the citrulline modification. Residues S362, S378, and S385 each carry the phosphoserine modification. K389 is subject to N6-acetyllysine. K401 participates in a covalent cross-link: Glycyl lysine isopeptide (Lys-Gly) (interchain with G-Cter in SUMO2). S402 is modified (phosphoserine). A helical; Signal-anchor for type II membrane protein membrane pass occupies residues 411-434 (IPVWIKILLFVVVAVFLFLVYQAM). Residues 435-454 (ETNQVNPFSNFLHVDPRKSN) lie on the Lumenal side of the membrane.

It belongs to the LEM family. In terms of assembly, interacts with LMNB1, LMNB2, BANF1, AKAP8L, GMCL and chromosomes. Isoform Zeta interacts with BANF1/BAF and may sequester it in the cytoplasm. Post-translationally, mitosis-specific phosphorylation specifically abolishes its binding to lamin B and chromosomes. In terms of processing, citrullinated by PADI4. As to expression, expressed in many tissues. Most abundant in adult thymus and fetal liver.

It is found in the nucleus inner membrane. The protein localises to the cytoplasm. Its function is as follows. May help direct the assembly of the nuclear lamina and thereby help maintain the structural organization of the nuclear envelope. Possible receptor for attachment of lamin filaments to the inner nuclear membrane. May be involved in the control of initiation of DNA replication through its interaction with NAKAP95. In terms of biological role, thymopoietin (TP) and Thymopentin (TP5) may play a role in T-cell development and function. TP5 is an immunomodulating pentapeptide. In Homo sapiens (Human), this protein is Lamina-associated polypeptide 2, isoforms beta/gamma (TMPO).